The primary structure comprises 327 residues: tRNA N6-adenosine threonylcarbamoyltransferase (327 aa).

Fe cation-binding residues include histidine 107 and histidine 111. Substrate-binding positions include 129–133 (LVSGG), aspartate 162, glycine 175, and asparagine 263. Aspartate 291 contacts Fe cation.

It belongs to the KAE1 / TsaD family. Requires Fe(2+) as cofactor.

It localises to the cytoplasm. It carries out the reaction L-threonylcarbamoyladenylate + adenosine(37) in tRNA = N(6)-L-threonylcarbamoyladenosine(37) in tRNA + AMP + H(+). In terms of biological role, required for the formation of a threonylcarbamoyl group on adenosine at position 37 (t(6)A37) in tRNAs that read codons beginning with adenine. Is involved in the transfer of the threonylcarbamoyl moiety of threonylcarbamoyl-AMP (TC-AMP) to the N6 group of A37, together with TsaE and TsaB. TsaD likely plays a direct catalytic role in this reaction. The sequence is that of tRNA N6-adenosine threonylcarbamoyltransferase from Nautilia profundicola (strain ATCC BAA-1463 / DSM 18972 / AmH).